Reading from the N-terminus, the 366-residue chain is MNKVVLLCRPGFEKECAAEITDKAGKREIFGFARVKENAGYVIYECYQPEDGEKLISELPFSSLIFARQWFVVGELLQHLPPEDRITPIVGMLQGVVEKGGELRVEVADTNESKELMKFCRKFTVPLRAALRDAGVLTNYETPKRPVVHVFFIAPGCCYTGYSFAHNNSPFYMGIPRLKFPSDAPSRSTLKLEEALHVFIPEDEWDERLANGMYAVDLGACPGGWTYQLVKRNMWVYSVDNGPMAQSLMDTGQVTWLREDGFRYRPNRNNISWMVCDMVEKPAKVTALMAQWLVNGWCRETIFNLKLPMKKRYEEVSHNLAYLQAQLDEHGVNAQIQARQLYHDREEVTVHVRRLWAAVGGRRDER.

S-adenosyl-L-methionine-binding positions include Ser188, Cys221–Gly224, Asp240, Asp260, and Asp277. The Proton acceptor role is filled by Lys306.

It belongs to the class I-like SAM-binding methyltransferase superfamily. RNA methyltransferase RlmE family. RlmM subfamily. As to quaternary structure, monomer.

Its subcellular location is the cytoplasm. It carries out the reaction cytidine(2498) in 23S rRNA + S-adenosyl-L-methionine = 2'-O-methylcytidine(2498) in 23S rRNA + S-adenosyl-L-homocysteine + H(+). Catalyzes the 2'-O-methylation at nucleotide C2498 in 23S rRNA. The polypeptide is Ribosomal RNA large subunit methyltransferase M (Salmonella newport (strain SL254)).